The primary structure comprises 319 residues: Acetyl-coenzyme A carboxylase carboxyl transferase subunit alpha (319 aa).

The CoA carboxyltransferase C-terminal domain maps to N32–A293.

Belongs to the AccA family. As to quaternary structure, acetyl-CoA carboxylase is a heterohexamer composed of biotin carboxyl carrier protein (AccB), biotin carboxylase (AccC) and two subunits each of ACCase subunit alpha (AccA) and ACCase subunit beta (AccD).

Its subcellular location is the cytoplasm. The catalysed reaction is N(6)-carboxybiotinyl-L-lysyl-[protein] + acetyl-CoA = N(6)-biotinyl-L-lysyl-[protein] + malonyl-CoA. Its pathway is lipid metabolism; malonyl-CoA biosynthesis; malonyl-CoA from acetyl-CoA: step 1/1. In terms of biological role, component of the acetyl coenzyme A carboxylase (ACC) complex. First, biotin carboxylase catalyzes the carboxylation of biotin on its carrier protein (BCCP) and then the CO(2) group is transferred by the carboxyltransferase to acetyl-CoA to form malonyl-CoA. This Xylella fastidiosa (strain Temecula1 / ATCC 700964) protein is Acetyl-coenzyme A carboxylase carboxyl transferase subunit alpha.